The following is a 435-amino-acid chain: ATP-dependent RNA helicase RhlB (435 aa).

The Q motif signature appears at 9 to 37 (QKFADFSLQTEIKTALNESGFEYCTPIQA). A Helicase ATP-binding domain is found at 40-219 (LPILLQKKDI…YDHMNEPEKV (180 aa)). 53–60 (AQTGTGKT) serves as a coordination point for ATP. The DEAD box signature appears at 165–168 (DEAD). Positions 243-390 (KMRLLLTLLE…VTNYDSEALL (148 aa)) constitute a Helicase C-terminal domain. The tract at residues 395–435 (APVRVHRKHNSRPQGRSGSGGKPRSGNRNAPRRHDKTRRHS) is disordered. The span at 424–435 (APRRHDKTRRHS) shows a compositional bias: basic residues.

The protein belongs to the DEAD box helicase family. RhlB subfamily. In terms of assembly, component of the RNA degradosome, which is a multiprotein complex involved in RNA processing and mRNA degradation.

Its subcellular location is the cytoplasm. The catalysed reaction is ATP + H2O = ADP + phosphate + H(+). Its function is as follows. DEAD-box RNA helicase involved in RNA degradation. Has RNA-dependent ATPase activity and unwinds double-stranded RNA. The polypeptide is ATP-dependent RNA helicase RhlB (Shewanella sediminis (strain HAW-EB3)).